The chain runs to 529 residues: Delayed-rectifier potassium channel regulatory subunit KCNS1 (529 aa).

The Cytoplasmic portion of the chain corresponds to 1–217; the sequence is MLMLLVRGTH…LTMENPGYSL (217 aa). Residues 218–239 traverse the membrane as a helical segment; it reads PSKLFSCVSISVVLASIAAMCI. Residues 240–270 are Extracellular-facing; that stretch reads HSLPEYQAREAAAAVAAVAAGRSPEGVRDDP. The chain crosses the membrane as a helical span at residues 271–293; that stretch reads VLRRLEYFCIAWFSFEVSSRLLL. Over 294–304 the chain is Cytoplasmic; the sequence is APSTRNFFCHP. The helical transmembrane segment at 305–322 threads the bilayer; it reads LNLIDIVSVLPFYLTLLA. Residues 323 to 340 lie on the Extracellular side of the membrane; it reads GVALGDQGGTGGKELGHL. A helical; Voltage-sensor membrane pass occupies residues 341 to 361; it reads GKVVQVFRLMRIFRVLKLARH. Residues 362–376 lie on the Cytoplasmic side of the membrane; the sequence is STGLRSLGATLKHSY. The chain crosses the membrane as a helical span at residues 377-398; that stretch reads REVGILLLYLAVGVSVFSGVAY. Residues 399-411 lie on the Extracellular side of the membrane; that stretch reads TAEKEEDVGFNTI. The segment at residues 412-423 is an intramembrane region (helical); the sequence is PACWWWGTVSMT. The Selectivity filter signature appears at 424 to 429; it reads TVGYGD. An intramembrane segment occupies 424–431; that stretch reads TVGYGDVV. The Extracellular portion of the chain corresponds to 432-438; it reads PVTVAGK. A helical membrane pass occupies residues 439–467; sequence LAASGCILGGILVVALPITIIFNKFSHFY. The Cytoplasmic segment spans residues 468 to 529; it reads RRQKALEAAV…PSEPPHPQMY (62 aa). A disordered region spans residues 494–529; it reads GVSEASLETSRETSQEGRSADLETQAPSEPPHPQMY. Positions 502–514 are enriched in basic and acidic residues; it reads TSRETSQEGRSAD.

This sequence belongs to the potassium channel family. S (TC 1.A.1.2) subfamily. Kv9.1/KCNS1 sub-subfamily. In terms of assembly, heterotetramer with KCNB1. Heterotetramer with KCNB2. Does not form homomultimers.

The protein localises to the cell membrane. Potassium channel regulatory subunit that modulate the delayed rectifier voltage-gated potassium channel activity of KCNB1 and KCNB2 by altering their kinetics, expression levels, and shifting the half-inactivation potential to more polarized values. While it does not form functional channels on its own, it can form functional heterotetrameric channels with KCNB1 and KCNB2. Each regulatory subunit has unique regulatory properties that can lead to extensive inhibition, significant changes in kinetics, and/or substantial shifts in the voltage dependencies of the inactivation process. This chain is Delayed-rectifier potassium channel regulatory subunit KCNS1, found in Macaca mulatta (Rhesus macaque).